Consider the following 394-residue polypeptide: Elongation factor Tu 2 (394 aa).

One can recognise a tr-type G domain in the interval 10 to 204 (KPHVNVGTIG…ALDSYIPEPE (195 aa)). The interval 19 to 26 (GHVDHGKT) is G1. 19 to 26 (GHVDHGKT) is a GTP binding site. Threonine 26 serves as a coordination point for Mg(2+). Positions 60 to 64 (GITIN) are G2. The segment at 81 to 84 (DCPG) is G3. Residues 81-85 (DCPGH) and 136-139 (NKCD) contribute to the GTP site. A G4 region spans residues 136–139 (NKCD). Positions 174 to 176 (SAL) are G5.

It belongs to the TRAFAC class translation factor GTPase superfamily. Classic translation factor GTPase family. EF-Tu/EF-1A subfamily. Monomer.

Its subcellular location is the cytoplasm. The enzyme catalyses GTP + H2O = GDP + phosphate + H(+). Functionally, GTP hydrolase that promotes the GTP-dependent binding of aminoacyl-tRNA to the A-site of ribosomes during protein biosynthesis. This is Elongation factor Tu 2 from Shewanella loihica (strain ATCC BAA-1088 / PV-4).